A 440-amino-acid chain; its full sequence is Gap junction gamma-2 protein (440 aa).

Residues 1–21 (MTNMSWSFLTRLLEEIHNHST) lie on the Cytoplasmic side of the membrane. The chain crosses the membrane as a helical span at residues 22 to 42 (FVGKVWLTVLVVFRIVLTAVG). The Extracellular portion of the chain corresponds to 43 to 78 (GESIYSDEQSKFTCNTRQPGCDNVCYDAFAPLSHVR). A helical transmembrane segment spans residues 79-99 (FWVFQIVVISTPSVMYLGYAV). Residues 100 to 223 (HRLARASEQE…AQLVVRAAFE (124 aa)) are Cytoplasmic-facing. The disordered stretch occupies residues 108–199 (QERRRALRRR…TPGPAGQHDG (92 aa)). Positions 112–124 (RALRRRPGPRRLP) are enriched in basic residues. Positions 150-173 (LEEDEDEEPGAPEGPGEDTEEERT) are enriched in acidic residues. A helical membrane pass occupies residues 224–244 (VAFLVGQYLLYGFEVPPFFAC). The Extracellular portion of the chain corresponds to 245 to 264 (SRQPCPHVVDCFVSRPTEKT). The chain crosses the membrane as a helical span at residues 265–285 (VFLLVMYVVSCLCLLLNLCEM). Over 286–440 (AHLGLGSAQD…SRDGKATVWI (155 aa)) the chain is Cytoplasmic. Positions 368 to 440 (ADRDSPPCSG…SRDGKATVWI (73 aa)) are disordered. Position 372 is a phosphoserine (Ser372). Low complexity predominate over residues 380 to 401 (ATSRGPPRAGGPASGTGSATSG).

This sequence belongs to the connexin family. Gamma-type subfamily. In terms of assembly, a connexon is composed of a hexamer of connexins. Interacts with TJP1. In terms of tissue distribution, mainly expressed by oligodendrocytes in the central nervous system. Expressed in optic nerve (at protein level).

It is found in the cell membrane. The protein resides in the cell junction. Its subcellular location is the gap junction. One gap junction consists of a cluster of closely packed pairs of transmembrane channels, the connexons, through which materials of low MW diffuse from one cell to a neighboring cell. May play a role in myelination in central and peripheral nervous systems. This chain is Gap junction gamma-2 protein (Gjc2), found in Rattus norvegicus (Rat).